We begin with the raw amino-acid sequence, 520 residues long: GMP synthase [glutamine-hydrolyzing] (520 aa).

One can recognise a Glutamine amidotransferase type-1 domain in the interval 9-202 (KILILDFGSQ…VRQICGCTGQ (194 aa)). Cysteine 86 functions as the Nucleophile in the catalytic mechanism. Active-site residues include histidine 176 and glutamate 178. The region spanning 203 to 395 (WTPGQIIEDA…LGLPHPMVYR (193 aa)) is the GMPS ATP-PPase domain. Residue 230 to 236 (SGGVDSS) coordinates ATP.

As to quaternary structure, homodimer.

The enzyme catalyses XMP + L-glutamine + ATP + H2O = GMP + L-glutamate + AMP + diphosphate + 2 H(+). It participates in purine metabolism; GMP biosynthesis; GMP from XMP (L-Gln route): step 1/1. Functionally, catalyzes the synthesis of GMP from XMP. This chain is GMP synthase [glutamine-hydrolyzing], found in Syntrophotalea carbinolica (strain DSM 2380 / NBRC 103641 / GraBd1) (Pelobacter carbinolicus).